Consider the following 302-residue polypeptide: Tyrosine--tRNA ligase 2 (302 aa).

Tyr33 lines the L-tyrosine pocket. The 'HIGH' region signature appears at 38–47 (PTADSLHLGH). 2 residues coordinate L-tyrosine: Tyr160 and Gln164. The 'KMSKS' region signature appears at 220-224 (KFGKS). Lys223 contributes to the ATP binding site.

It belongs to the class-I aminoacyl-tRNA synthetase family. TyrS type 1 subfamily. In terms of assembly, homodimer.

It is found in the cytoplasm. It catalyses the reaction tRNA(Tyr) + L-tyrosine + ATP = L-tyrosyl-tRNA(Tyr) + AMP + diphosphate + H(+). In terms of biological role, catalyzes the attachment of tyrosine to tRNA(Tyr) in a two-step reaction: tyrosine is first activated by ATP to form Tyr-AMP and then transferred to the acceptor end of tRNA(Tyr). The polypeptide is Tyrosine--tRNA ligase 2 (tyrS2) (Streptococcus thermophilus (strain CNRZ 1066)).